Consider the following 207-residue polypeptide: Ribonuclease HII (207 aa).

The RNase H type-2 domain maps to 19–207 (HCIAGVDEVG…PVKKALGIEE (189 aa)). A divalent metal cation is bound by residues D25, E26, and D117.

This sequence belongs to the RNase HII family. Mn(2+) is required as a cofactor. Mg(2+) serves as cofactor.

The protein localises to the cytoplasm. The enzyme catalyses Endonucleolytic cleavage to 5'-phosphomonoester.. Endonuclease that specifically degrades the RNA of RNA-DNA hybrids. This Vibrio vulnificus (strain CMCP6) protein is Ribonuclease HII.